The sequence spans 457 residues: tRNA-2-methylthio-N(6)-dimethylallyladenosine synthase (457 aa).

The 118-residue stretch at Lys-3 to Thr-120 folds into the MTTase N-terminal domain. 6 residues coordinate [4Fe-4S] cluster: Cys-12, Cys-49, Cys-83, Cys-157, Cys-161, and Cys-164. One can recognise a Radical SAM core domain in the interval Arg-143–Arg-377. The TRAM domain occupies Gln-380–Leu-447.

This sequence belongs to the methylthiotransferase family. MiaB subfamily. Monomer. The cofactor is [4Fe-4S] cluster.

The protein localises to the cytoplasm. The catalysed reaction is N(6)-dimethylallyladenosine(37) in tRNA + (sulfur carrier)-SH + AH2 + 2 S-adenosyl-L-methionine = 2-methylsulfanyl-N(6)-dimethylallyladenosine(37) in tRNA + (sulfur carrier)-H + 5'-deoxyadenosine + L-methionine + A + S-adenosyl-L-homocysteine + 2 H(+). Catalyzes the methylthiolation of N6-(dimethylallyl)adenosine (i(6)A), leading to the formation of 2-methylthio-N6-(dimethylallyl)adenosine (ms(2)i(6)A) at position 37 in tRNAs that read codons beginning with uridine. This is tRNA-2-methylthio-N(6)-dimethylallyladenosine synthase from Burkholderia multivorans (strain ATCC 17616 / 249).